The sequence spans 273 residues: 4-hydroxy-tetrahydrodipicolinate reductase (273 aa).

12–17 is a binding site for NAD(+); the sequence is GAMGRM. K39 contacts NADP(+). Residues 102–104 and 126–129 each bind NAD(+); these read GTT and ASNF. H159 serves as the catalytic Proton donor/acceptor. Position 160 (H160) interacts with (S)-2,3,4,5-tetrahydrodipicolinate. The Proton donor role is filled by K163. (S)-2,3,4,5-tetrahydrodipicolinate is bound at residue 169–170; it reads GT.

The protein belongs to the DapB family. Homotetramer.

It localises to the cytoplasm. It carries out the reaction (S)-2,3,4,5-tetrahydrodipicolinate + NAD(+) + H2O = (2S,4S)-4-hydroxy-2,3,4,5-tetrahydrodipicolinate + NADH + H(+). The catalysed reaction is (S)-2,3,4,5-tetrahydrodipicolinate + NADP(+) + H2O = (2S,4S)-4-hydroxy-2,3,4,5-tetrahydrodipicolinate + NADPH + H(+). The protein operates within amino-acid biosynthesis; L-lysine biosynthesis via DAP pathway; (S)-tetrahydrodipicolinate from L-aspartate: step 4/4. Catalyzes the conversion of 4-hydroxy-tetrahydrodipicolinate (HTPA) to tetrahydrodipicolinate. The polypeptide is 4-hydroxy-tetrahydrodipicolinate reductase (Buchnera aphidicola subsp. Schizaphis graminum (strain Sg)).